The primary structure comprises 324 residues: Probable nicotianamine synthase 4 (324 aa).

It belongs to the nicotianamine synthase (NAS)-like family.

It catalyses the reaction 3 S-adenosyl-L-methionine = nicotianamine + 3 S-methyl-5'-thioadenosine + 3 H(+). Functionally, synthesizes nicotianamine, a polyamine which serves as a sensor for the physiological iron status within the plant, and/or might be involved in the transport of iron. This Arabidopsis thaliana (Mouse-ear cress) protein is Probable nicotianamine synthase 4 (NAS4).